Consider the following 297-residue polypeptide: HTH-type transcriptional regulator PerR (297 aa).

An HTH lysR-type domain is found at 7–64 (APLNLLRAFEAAGRTGAFALAASELELSPSAISHAIRKLENLLDVRLFQRSTREITLT). Residues 24-44 (FALAASELELSPSAISHAIRK) constitute a DNA-binding region (H-T-H motif).

This sequence belongs to the LysR transcriptional regulatory family.

Functionally, apparent regulatory gene involved in peroxide resistance in stationary phase. This is HTH-type transcriptional regulator PerR (perR) from Escherichia coli (strain K12).